The following is a 289-amino-acid chain: ATP synthase gamma chain (289 aa).

It belongs to the ATPase gamma chain family. F-type ATPases have 2 components, CF(1) - the catalytic core - and CF(0) - the membrane proton channel. CF(1) has five subunits: alpha(3), beta(3), gamma(1), delta(1), epsilon(1). CF(0) has three main subunits: a, b and c.

Its subcellular location is the cell inner membrane. In terms of biological role, produces ATP from ADP in the presence of a proton gradient across the membrane. The gamma chain is believed to be important in regulating ATPase activity and the flow of protons through the CF(0) complex. This is ATP synthase gamma chain from Cereibacter sphaeroides (strain ATCC 17025 / ATH 2.4.3) (Rhodobacter sphaeroides).